A 186-amino-acid polypeptide reads, in one-letter code: HTH-type transcriptional regulator Hpr (186 aa).

Residues 13-157 enclose the HTH marR-type domain; sequence AMLYSQRIAQ…VMAVIRNIYG (145 aa). The segment at residues 63-86 is a DNA-binding region (H-T-H motif); the sequence is ISDVAKFGVMHVSTAFNFSKKLEE.

As to quaternary structure, homodimer.

Functionally, negative regulator of protease production and sporulation. The chain is HTH-type transcriptional regulator Hpr from Lysinibacillus sphaericus (strain C3-41).